The sequence spans 359 residues: MMACCLRNKRRMKGKLSWKSKKRDLSHSGNWAPEDDNDEGKIVFFGGSNYTFDLDDLLAASAEILGKGAHVTTYKVAVEDTATVVVKRLEEVVVGRREFEQQMEIVGRIRHDNVAELKAYYYSKIDKLAVYSYYSQGNLFEMLHGKLSFCIPLSMLLWYAVSKTNNSTFAGESQVPLDWESRLRIAIGAARGLAIIHEADDGKFVHGNIKSSNIFTNSKCYGCICDLGLTHITKSLPQTTLRSSGYHAPEITDTRKSTQFSDVYSFGVVLLELLTGKSPASPLSLDENMDLASWIRSVVSKEWTGEVFDNELMMQMGIEEELVEMLQIGLACVALKPQDRPHITHIVKLIQDIPTNFNL.

The Protein kinase domain occupies 59–357; sequence AASAEILGKG…KLIQDIPTNF (299 aa). ATP-binding positions include 65-73 and Lys87; that span reads LGKGAHVTT.

Belongs to the protein kinase superfamily. Ser/Thr protein kinase family.

This chain is Probably inactive receptor-like protein kinase At5g41680, found in Arabidopsis thaliana (Mouse-ear cress).